We begin with the raw amino-acid sequence, 111 residues long: Prefoldin subunit 2 (111 aa).

Coiled-coil stretches lie at residues 1 to 36 and 72 to 92; these read MEQRNNVFQAKYNEYKQILEELQTKIIELGHDKDEH and LETKKENIEGTISKMKETLIQ.

This sequence belongs to the prefoldin subunit beta family. As to quaternary structure, heterohexamer of two PFD-alpha type and four PFD-beta type subunits.

The protein localises to the cytoplasm. In terms of biological role, binds specifically to cytosolic chaperonin (c-CPN) and transfers target proteins to it. Binds to nascent polypeptide chain and promotes folding in an environment in which there are many competing pathways for nonnative proteins. The protein is Prefoldin subunit 2 (GIM4) of Saccharomyces cerevisiae (strain ATCC 204508 / S288c) (Baker's yeast).